Consider the following 90-residue polypeptide: MAVKIRLTRMGSKKKPFYRINVADSRAPRDGRFIETVGTYNPLVAENQITIKEDRVLEWLSKGAQPSDTVRNILSKAGVMAKFHDQKFSK.

This sequence belongs to the bacterial ribosomal protein bS16 family.

This is Small ribosomal subunit protein bS16 from Streptococcus pyogenes serotype M4 (strain MGAS10750).